Here is a 456-residue protein sequence, read N- to C-terminus: tRNA modification GTPase MnmE (456 aa).

3 residues coordinate (6S)-5-formyl-5,6,7,8-tetrahydrofolate: Arg25, Glu82, and Lys121. The TrmE-type G domain maps to 217-379 (GIKVVIIGKP…LLDEIVKIAG (163 aa)). Asn227 lines the K(+) pocket. GTP is bound by residues 227 to 232 (NAGKSS), 246 to 252 (TDIAGTT), and 271 to 274 (DTAG). Residue Ser231 coordinates Mg(2+). K(+) is bound by residues Thr246, Ile248, and Thr251. Position 252 (Thr252) interacts with Mg(2+). Lys456 lines the (6S)-5-formyl-5,6,7,8-tetrahydrofolate pocket.

Belongs to the TRAFAC class TrmE-Era-EngA-EngB-Septin-like GTPase superfamily. TrmE GTPase family. Homodimer. Heterotetramer of two MnmE and two MnmG subunits. The cofactor is K(+).

Its subcellular location is the cytoplasm. Exhibits a very high intrinsic GTPase hydrolysis rate. Involved in the addition of a carboxymethylaminomethyl (cmnm) group at the wobble position (U34) of certain tRNAs, forming tRNA-cmnm(5)s(2)U34. The sequence is that of tRNA modification GTPase MnmE from Endomicrobium trichonymphae.